The sequence spans 182 residues: Isopentenyl-diphosphate Delta-isomerase (182 aa).

The Mn(2+) site is built by His25 and His32. The Nudix hydrolase domain maps to 30-164; the sequence is RLHLAFSSWL…PWAFSPWMVM (135 aa). The active site involves Cys67. A Mg(2+)-binding site is contributed by Cys67. His69 contacts Mn(2+). Glu87 contributes to the Mg(2+) binding site. Mn(2+) contacts are provided by Glu114 and Glu116. Glu116 is a catalytic residue.

Belongs to the IPP isomerase type 1 family. As to quaternary structure, homodimer. Requires Mg(2+) as cofactor. Mn(2+) is required as a cofactor.

The protein localises to the cytoplasm. It carries out the reaction isopentenyl diphosphate = dimethylallyl diphosphate. The protein operates within isoprenoid biosynthesis; dimethylallyl diphosphate biosynthesis; dimethylallyl diphosphate from isopentenyl diphosphate: step 1/1. In terms of biological role, catalyzes the 1,3-allylic rearrangement of the homoallylic substrate isopentenyl (IPP) to its highly electrophilic allylic isomer, dimethylallyl diphosphate (DMAPP). The protein is Isopentenyl-diphosphate Delta-isomerase of Shigella dysenteriae serotype 1 (strain Sd197).